Consider the following 604-residue polypeptide: UvrABC system protein C (604 aa).

A GIY-YIG domain is found at 15 to 92; the sequence is DLPGCYLMKN…IQKHQPYFNI (78 aa). The region spanning 197 to 232 is the UVR domain; the sequence is ETVKKQLTKRMDQAAADLEFERAAELRDQLNYIEMT.

It belongs to the UvrC family. Interacts with UvrB in an incision complex.

It is found in the cytoplasm. The UvrABC repair system catalyzes the recognition and processing of DNA lesions. UvrC both incises the 5' and 3' sides of the lesion. The N-terminal half is responsible for the 3' incision and the C-terminal half is responsible for the 5' incision. The polypeptide is UvrABC system protein C (Lactiplantibacillus plantarum (strain ATCC BAA-793 / NCIMB 8826 / WCFS1) (Lactobacillus plantarum)).